The sequence spans 1344 residues: DEAD-box ATP-dependent RNA helicase FANCM (1344 aa).

A disordered region spans residues 39 to 61 (SSSHFTPLANPPITANLTKPPAK). The 169-residue stretch at 124-292 (ITKTALFSNT…GIIDNLQIST (169 aa)) folds into the Helicase ATP-binding domain. 137 to 144 (LPTGLGKT) contributes to the ATP binding site. Positions 240–243 (DEAH) match the DEAH box motif. Residues 450–621 (KLSKMLEILV…SFNFHPSPRM (172 aa)) enclose the Helicase C-terminal domain. Disordered stretches follow at residues 765–790 (VNTSQRKAKQVESPTSTLETTEKDYE), 1110–1148 (EVSSGAEMSADENEDVTGDSFEDSFIDDGTMPTANTQAE), 1183–1218 (YSAGPLTRINESRSDSDKSLSSLRTPKTTNSESNQD), and 1307–1344 (KQRSEAKEKEDATVIPNPGMQRSDGMEKDAPSFDLGLW). The segment covering 1118–1135 (SADENEDVTGDSFEDSFI) has biased composition (acidic residues). Residues 1207–1218 (TPKTTNSESNQD) show a composition bias toward polar residues. Residues 1308–1318 (QRSEAKEKEDA) are compositionally biased toward basic and acidic residues.

This sequence belongs to the DEAD box helicase family. DEAH subfamily. FANCM sub-subfamily.

It is found in the nucleus. It carries out the reaction ATP + H2O = ADP + phosphate + H(+). Involved in ordered homologous recombination (HR) events in somatic and meiotic cells. Involved in the suppression of spontaneous HR events in somatic cells. Has an opposite function to the DNA binding cofactor MHF1 which promotes spontaneous HR. Functions in replicative repair independently of MHF1 and in a parallel pathway to the endonuclease MUS81. Acts in the same pathway as the two DNA-binding cofactors MHF1 and MHF2 to restrain class II meiotic crossover (CO), and acts exclusively with MHF1 and MHF2 during meiosis to repair DNA interstrand cross-links (ICLs). This common pathway is in parallel to the pathway that involves the RECQ4A helicase. Seems to be involved in the stabilization of recombination intermediates. Involved in DNA double-strand break (DSB) repair during meiosis. Required for synthesis-dependent strand annealing (SDSA) and to a lesser extent for single-strand annealing (SSA). May process meiotic DSB repair intermediates, possibly D-loops, driving them toward noncrossover (NCO) resolution. The sequence is that of DEAD-box ATP-dependent RNA helicase FANCM from Arabidopsis thaliana (Mouse-ear cress).